We begin with the raw amino-acid sequence, 501 residues long: ATP synthase subunit alpha (501 aa).

169 to 176 is a binding site for ATP; it reads GDRQTGKT.

The protein belongs to the ATPase alpha/beta chains family. As to quaternary structure, F-type ATPases have 2 components, CF(1) - the catalytic core - and CF(0) - the membrane proton channel. CF(1) has five subunits: alpha(3), beta(3), gamma(1), delta(1), epsilon(1). CF(0) has three main subunits: a(1), b(2) and c(9-12). The alpha and beta chains form an alternating ring which encloses part of the gamma chain. CF(1) is attached to CF(0) by a central stalk formed by the gamma and epsilon chains, while a peripheral stalk is formed by the delta and b chains.

The protein localises to the cell membrane. It carries out the reaction ATP + H2O + 4 H(+)(in) = ADP + phosphate + 5 H(+)(out). Produces ATP from ADP in the presence of a proton gradient across the membrane. The alpha chain is a regulatory subunit. The protein is ATP synthase subunit alpha of Streptococcus pneumoniae serotype 2 (strain D39 / NCTC 7466).